The chain runs to 261 residues: MLLAIDAGNTNVVFAVFEGDVKRGQWRVSTDGRRTADEHAVWLVALMAMKGLTPKDIHAAILSSVVPAQTGPLTTLCEEHFGCTPMRVGDPGVRLGLEVRIDNPKEAGADRLVNAVAAVATYPPPLVVIDIGTGTTFDVVDANGDFAGGVIAPGPVLSLDALHRVAAQLPKVDILRPDRVIGKGTVAAMQSGMFWGYTGMIEGILTRIKAELSPTGDPPVTVIGTGGLVRLFAEGSSLVDAIDADLTLRGLRLIHQRNAAR.

6–13 lines the ATP pocket; sequence DAGNTNVV. 108 to 111 serves as a coordination point for substrate; it reads GADR. Asp110 acts as the Proton acceptor in catalysis. Residue Asp130 coordinates K(+). An ATP-binding site is contributed by Thr133. Position 185 (Thr185) interacts with substrate.

This sequence belongs to the type III pantothenate kinase family. As to quaternary structure, homodimer. Requires NH4(+) as cofactor. K(+) serves as cofactor.

It localises to the cytoplasm. The enzyme catalyses (R)-pantothenate + ATP = (R)-4'-phosphopantothenate + ADP + H(+). Its pathway is cofactor biosynthesis; coenzyme A biosynthesis; CoA from (R)-pantothenate: step 1/5. In terms of biological role, catalyzes the phosphorylation of pantothenate (Pan), the first step in CoA biosynthesis. This Rhodospirillum centenum (strain ATCC 51521 / SW) protein is Type III pantothenate kinase.